The following is a 408-amino-acid chain: Tryptophan synthase beta chain (408 aa).

An N6-(pyridoxal phosphate)lysine modification is found at Lys-97.

The protein belongs to the TrpB family. As to quaternary structure, tetramer of two alpha and two beta chains. It depends on pyridoxal 5'-phosphate as a cofactor.

It catalyses the reaction (1S,2R)-1-C-(indol-3-yl)glycerol 3-phosphate + L-serine = D-glyceraldehyde 3-phosphate + L-tryptophan + H2O. It participates in amino-acid biosynthesis; L-tryptophan biosynthesis; L-tryptophan from chorismate: step 5/5. Its function is as follows. The beta subunit is responsible for the synthesis of L-tryptophan from indole and L-serine. This Pseudomonas syringae pv. syringae protein is Tryptophan synthase beta chain (trpB).